Consider the following 916-residue polypeptide: MDYKDTLLLPTTDFAMRGNLPECEPARYAKWDEQKVYEKMKAKREKSAISFNIHDGPPYANGHLHIGHALNKILKDIILKTHYFFGQGIRYTPGWDCHGLPIEQQVEVKLGDKKKSMSKSDIRQECRNWAKEFITVQKDEFKSLGVIGDWNDPYLTMKFKFEANIYRTLCEVAKKGLLVERSKPVFWSWAARSALAEAEVEYEDKEDYSLYVAFCLSDAACKKLGVSDAKAVIWTTTPWTLVANQAISLNPNEKYALTSEGYIIALPLKETLINQGIINGKILKEFASSELEGLSAINPLNGRDSRFILGEHVLMDGGTGLVHTAPGHGEDDYFASLKYGIEVIMPVDEAGLYDETLRVKKLLPEHLLNEFIGLHIFKANEKLIELLGDAAVKVSKFVHSYPFCWRTHKPVIYRATKQWFIAMDEPKLSGKTLRQTALEALKSVKFYPEVGVKRISSMIENRPDWCISRQRDWGVPIAFFRDSATKEPIFDSRVLEHVAKVFDEKGSDAWWNLEISELLPKGTNLDPSKLEKVTDILDVWFDSGSTWNAVLNSGDYDAGGYQADMYLEGSDQHRGWFQSSLLLSCAINQKAPYKSVLTHGFTVDGNGNKMSKSKGNVIAPSDVAKRYGVEILRLWVGLSDYSSDLKISDDILKQVAEQYRKIRNTIRFLLANINDLDDISSHFGTLDKWILARATKSFKEVSECFKNYEYSKGFNILLNFLSTDLSGIYLDICKDRLYCDEKDGLRRRSSQSAMAIIAKSLLSLIAPTLTYTVDEAIEFAPDIIKNGAKDAFDLVYEPLVFEFKIDDELLTSSREKFNEIIDVLKKDKIIKSTLEVILETSSNEILANDLDEIIDWYMVSFVRNIESDEFLAEFAVGNDKFKIVKADRYKCPRCWKYAAKIDNDLCPRCAKVLKRV.

The 'HIGH' region signature appears at 58–68 (PYANGHLHIGH). E568 contacts L-isoleucyl-5'-AMP. The short motif at 609–613 (KMSKS) is the 'KMSKS' region element. K612 provides a ligand contact to ATP. Zn(2+) contacts are provided by C891, C894, C906, and C909.

The protein belongs to the class-I aminoacyl-tRNA synthetase family. IleS type 1 subfamily. Monomer. Requires Zn(2+) as cofactor.

Its subcellular location is the cytoplasm. It catalyses the reaction tRNA(Ile) + L-isoleucine + ATP = L-isoleucyl-tRNA(Ile) + AMP + diphosphate. Functionally, catalyzes the attachment of isoleucine to tRNA(Ile). As IleRS can inadvertently accommodate and process structurally similar amino acids such as valine, to avoid such errors it has two additional distinct tRNA(Ile)-dependent editing activities. One activity is designated as 'pretransfer' editing and involves the hydrolysis of activated Val-AMP. The other activity is designated 'posttransfer' editing and involves deacylation of mischarged Val-tRNA(Ile). In Campylobacter fetus subsp. fetus (strain 82-40), this protein is Isoleucine--tRNA ligase.